A 352-amino-acid polypeptide reads, in one-letter code: Thymidine kinase (352 aa).

Gly32 to Ser39 lines the ATP pocket. The active-site Proton acceptor is the Glu60. The substrate site is built by Tyr78, Gln102, Phe105, and Phe148. Arg192 contacts ATP. Arg198 serves as a coordination point for substrate.

It belongs to the herpesviridae thymidine kinase family. In terms of assembly, homodimer.

The catalysed reaction is thymidine + ATP = dTMP + ADP + H(+). Catalyzes the transfer of the gamma-phospho group of ATP to thymidine to generate dTMP in the salvage pathway of pyrimidine synthesis. The dTMP serves as a substrate for DNA polymerase during viral DNA replication. Allows the virus to be reactivated and to grow in non-proliferative cells lacking a high concentration of phosphorylated nucleic acid precursors. This is Thymidine kinase from Equine herpesvirus 4 (strain 1942) (EHV-4).